We begin with the raw amino-acid sequence, 52 residues long: ATP synthase protein 8 (52 aa).

Residues 7-23 (MMWFSLFIMFSMTMMLF) form a helical membrane-spanning segment.

Belongs to the ATPase protein 8 family. F-type ATPases have 2 components, CF(1) - the catalytic core - and CF(0) - the membrane proton channel.

The protein resides in the mitochondrion membrane. In terms of biological role, mitochondrial membrane ATP synthase (F(1)F(0) ATP synthase or Complex V) produces ATP from ADP in the presence of a proton gradient across the membrane which is generated by electron transport complexes of the respiratory chain. F-type ATPases consist of two structural domains, F(1) - containing the extramembraneous catalytic core and F(0) - containing the membrane proton channel, linked together by a central stalk and a peripheral stalk. During catalysis, ATP synthesis in the catalytic domain of F(1) is coupled via a rotary mechanism of the central stalk subunits to proton translocation. Part of the complex F(0) domain. Minor subunit located with subunit a in the membrane. The chain is ATP synthase protein 8 (MT-ATP8) from Locusta migratoria (Migratory locust).